The chain runs to 710 residues: uncharacterized protein (710 aa).

2 coiled-coil regions span residues 273 to 298 and 477 to 528; these read LYRQERKELKNTKQRYLKKKNEMEEG and RYEK…VADT.

This is an uncharacterized protein from Coxiella burnetii (strain RSA 493 / Nine Mile phase I).